A 93-amino-acid chain; its full sequence is Small ribosomal subunit protein uS15 (93 aa).

The protein belongs to the universal ribosomal protein uS15 family. As to quaternary structure, part of the 30S ribosomal subunit. Forms a bridge to the 50S subunit in the 70S ribosome, contacting the 23S rRNA.

Functionally, one of the primary rRNA binding proteins, it binds directly to 16S rRNA where it helps nucleate assembly of the platform of the 30S subunit by binding and bridging several RNA helices of the 16S rRNA. In terms of biological role, forms an intersubunit bridge (bridge B4) with the 23S rRNA of the 50S subunit in the ribosome. The sequence is that of Small ribosomal subunit protein uS15 from Ehrlichia chaffeensis (strain ATCC CRL-10679 / Arkansas).